A 454-amino-acid polypeptide reads, in one-letter code: MSHKKVVAISESSSDEEVPVAPPTAPPKKRQRKAVEEPRGHQAMVEIARQATAALKARGDPGSIIVQTFCDQTVDVDKEGNVIFTPAKQKSICNKSGSPLASVASKIFKASEHKWQSAMEFALKVLNAYQVDHSKLTLLPDEGTLECFKKAVQAYITTSKMHVTYTFTNQKTFLHVAGRLLLDFVIKAAELAPGVNPSGCVVWQHGCQSSLMCLHGSPMIQKEQLVEMDVNSENAQRALKENPEKTKIVSNRWGRNVVQFKNEDAFCCSMDVNMSGGNFSGASCGMFYTDGPKAIMAFQQIMAFLKACYPSMPNAESHLLMPLKCECNWNSSLPLLGRQTCKITPFSLASASHIDKSEVDDQKMLATLNNPAMLVFQCCNPVYRNSKAAPQKNCDFKISSVDLVSCLQIAKQIWLSTVGERPPVKFPEFHWSDEHRYQTTILPQGQHDDDLVLF.

A disordered region spans residues 1-41; it reads MSHKKVVAISESSSDEEVPVAPPTAPPKKRQRKAVEEPRGH. Tyr-129 is subject to Phosphotyrosine; by host. Cys-213 and His-215 together coordinate Zn(2+). The flexible loop stretch occupies residues 226–260; the sequence is VEMDVNSENAQRALKENPEKTKIVSNRWGRNVVQF. Zn(2+)-binding residues include Cys-268, Cys-284, Cys-325, Cys-327, Cys-378, and Cys-394. A C-terminal arm, DBP binding region spans residues 440–454; it reads TILPQGQHDDDLVLF.

It belongs to the adenoviridae E2A DNA-binding protein family. Homomultimerizes on viral ssDNA bound to pTP. Forms a initiation complex with viral polymerase, pTP and hosts NFIA and POU2F1/OCT1. Interacts with host SRCAP.

It is found in the host nucleus. Functionally, plays a role in the elongation phase of viral strand displacement replication by unwinding the template in an ATP-independent fashion, employing its capacity to form multimers. Also enhances the rate of initiation. Released from template upon second strand synthesis. Assembles in complex with viral pTP, viral pol, host NFIA and host POU2F1/OCT1 on viral origin of replication. Covers the whole ssDNA genome during synthesis. The complementary strand synthesis induces its relese from DNA template. May inhibit cellular transcription mediated by the interaction between host SRCAP and CBP. The protein is DNA-binding protein of Canine adenovirus serotype 1 (strain CLL) (CAdV-1).